The following is a 1217-amino-acid chain: WD repeat-containing protein on Y chromosome (1217 aa).

8 WD repeats span residues 155-199 (EDMT…LRSA), 323-362 (RIPLGVSVFYVSEVKNILVTGGPDTFVRIWDVYISSEPSA), 366-405 (GHNGGIVAVFVQPEENKVYSVDYHKIIKVWDLQEHTLLQT), 456-495 (THAAPVSVVLYNRLFRNIVTCGLDSYIIVWDPWTGRRKII), 508-547 (TIDIEITAACFDPLEQFLLTGARDGSLKIWNYNNSVVVRN), 595-635 (FHTD…RRYN), 740-779 (KVGDCVLTMATDRKNRFLYTGTAFGYIKIWHIVNYCIPEA), and 823-862 (GHLKAINSIGFINLPKILFSGSHDYSCRLWTQSGRYLGTL). 2 disordered regions span residues 910-929 (QVKRPKPTEEREDEGEVEDT) and 1033-1217 (AGGQ…KDKP). Positions 919-929 (EREDEGEVEDT) are enriched in acidic residues. Polar residues-rich tracts occupy residues 1041–1054 (RASSTWGKPKTNSI), 1085–1107 (FGPNPSRVRSNSPKVSFMPSQLK), and 1137–1179 (PVST…TSAN). The segment covering 1181–1190 (KPDIMPVKIK) has biased composition (low complexity). Residues 1198-1210 (RNTAPVQITTSIA) show a composition bias toward polar residues.

The polypeptide is WD repeat-containing protein on Y chromosome (Drosophila mojavensis (Fruit fly)).